A 139-amino-acid polypeptide reads, in one-letter code: Putative pre-16S rRNA nuclease (139 aa).

This sequence belongs to the YqgF nuclease family.

The protein localises to the cytoplasm. Could be a nuclease involved in processing of the 5'-end of pre-16S rRNA. The chain is Putative pre-16S rRNA nuclease from Streptococcus agalactiae serotype Ia (strain ATCC 27591 / A909 / CDC SS700).